The sequence spans 345 residues: Phosphoribosylformylglycinamidine cyclo-ligase (345 aa).

The protein belongs to the AIR synthase family.

The protein localises to the cytoplasm. The enzyme catalyses 2-formamido-N(1)-(5-O-phospho-beta-D-ribosyl)acetamidine + ATP = 5-amino-1-(5-phospho-beta-D-ribosyl)imidazole + ADP + phosphate + H(+). It functions in the pathway purine metabolism; IMP biosynthesis via de novo pathway; 5-amino-1-(5-phospho-D-ribosyl)imidazole from N(2)-formyl-N(1)-(5-phospho-D-ribosyl)glycinamide: step 2/2. This Prochlorococcus marinus (strain MIT 9211) protein is Phosphoribosylformylglycinamidine cyclo-ligase.